Here is a 325-residue protein sequence, read N- to C-terminus: Phosphate import ATP-binding protein PstB (325 aa).

Residues 79–320 (IDNYNLWYSN…PNNEKTKDYI (242 aa)) enclose the ABC transporter domain. Residue 111–118 (GPSGCGKS) participates in ATP binding.

Belongs to the ABC transporter superfamily. Phosphate importer (TC 3.A.1.7) family. As to quaternary structure, the complex is composed of two ATP-binding proteins (PstB), two transmembrane proteins (PstC and PstA) and a solute-binding protein (PstS).

Its subcellular location is the cell membrane. It catalyses the reaction phosphate(out) + ATP + H2O = ADP + 2 phosphate(in) + H(+). Functionally, part of the ABC transporter complex PstSACB involved in phosphate import. Responsible for energy coupling to the transport system. This Mycoplasmoides gallisepticum (strain R(low / passage 15 / clone 2)) (Mycoplasma gallisepticum) protein is Phosphate import ATP-binding protein PstB.